Here is a 389-residue protein sequence, read N- to C-terminus: Succinate--CoA ligase [ADP-forming] subunit beta (389 aa).

The region spanning 9-244 is the ATP-grasp domain; sequence KEILRKYNVP…LDEEDANEIE (236 aa). ATP is bound by residues K46, 53–55, E99, A102, and E107; that span reads GRG. Residues N199 and D213 each contribute to the Mg(2+) site. Residues N264 and 321–323 contribute to the substrate site; that span reads GIM.

It belongs to the succinate/malate CoA ligase beta subunit family. As to quaternary structure, heterotetramer of two alpha and two beta subunits. The cofactor is Mg(2+).

The enzyme catalyses succinate + ATP + CoA = succinyl-CoA + ADP + phosphate. It catalyses the reaction GTP + succinate + CoA = succinyl-CoA + GDP + phosphate. Its pathway is carbohydrate metabolism; tricarboxylic acid cycle; succinate from succinyl-CoA (ligase route): step 1/1. Succinyl-CoA synthetase functions in the citric acid cycle (TCA), coupling the hydrolysis of succinyl-CoA to the synthesis of either ATP or GTP and thus represents the only step of substrate-level phosphorylation in the TCA. The beta subunit provides nucleotide specificity of the enzyme and binds the substrate succinate, while the binding sites for coenzyme A and phosphate are found in the alpha subunit. This is Succinate--CoA ligase [ADP-forming] subunit beta from Cupriavidus pinatubonensis (strain JMP 134 / LMG 1197) (Cupriavidus necator (strain JMP 134)).